We begin with the raw amino-acid sequence, 366 residues long: S-adenosylmethionine synthase 1 (366 aa).

A K(+)-binding site is contributed by E18. L-methionine is bound by residues E31 and Q74. Residues D142–N144, S210–F213, D221, R227–K228, A244, K248, and K252 contribute to the ATP site. D221 provides a ligand contact to L-methionine. K252 lines the L-methionine pocket.

Belongs to the AdoMet synthase family. In terms of assembly, homotetramer. Mn(2+) is required as a cofactor. Mg(2+) serves as cofactor. It depends on Co(2+) as a cofactor. The cofactor is K(+).

The protein resides in the cytoplasm. The catalysed reaction is L-methionine + ATP + H2O = S-adenosyl-L-methionine + phosphate + diphosphate. Its pathway is amino-acid biosynthesis; S-adenosyl-L-methionine biosynthesis; S-adenosyl-L-methionine from L-methionine: step 1/1. Functionally, catalyzes the formation of S-adenosylmethionine from methionine and ATP. The reaction comprises two steps that are both catalyzed by the same enzyme: formation of S-adenosylmethionine (AdoMet) and triphosphate, and subsequent hydrolysis of the triphosphate. The protein is S-adenosylmethionine synthase 1 (SAMS1) of Pisum sativum (Garden pea).